The following is a 305-amino-acid chain: Tetraspanin-12 (305 aa).

Topologically, residues 1 to 12 are cytoplasmic; it reads MAREDSVKCLRC. S-palmitoyl cysteine attachment occurs at residues C9 and C12. The helical transmembrane segment at 13-33 threads the bilayer; that stretch reads LLYALNLLFWLMSISVLAVSA. The Extracellular portion of the chain corresponds to 34 to 59; it reads WMRDYLNNVLTLTAETRVEEAVILTY. Residues 60 to 80 traverse the membrane as a helical segment; sequence FPVVHPVMIAVCCFLIIVGML. C83 carries the S-palmitoyl cysteine lipid modification. Residues 90–110 form a helical membrane-spanning segment; the sequence is LLLLAWYFGTLLVIFCVELAC. The Extracellular segment spans residues 111–224; that stretch reads GVWTYEQEVM…RGTKQLQVLR (114 aa). The chain crosses the membrane as a helical span at residues 225–245; the sequence is FLGISIGVTQILAMILTITLL. Residues 246–305 lie on the Cytoplasmic side of the membrane; the sequence is WALYYDRREPGTDQMLSLKNDASQHLSCHSVELLKPSLSRIFEHTSMANSFNTHFEMEEL.

The protein belongs to the tetraspanin (TM4SF) family. As to quaternary structure, component of a complex, at least composed of TSPAN12, FZD4 and norrin (NDP). Interacts (when palmitoylated) with ADAM10. Interacts with MMP14/MT1-MMP. Post-translationally, palmitoylated; required for interaction with ADAM10. The precise position of palmitoylated residues is unclear and occurs either on Cys-9, Cys-12 and/or Cys-83.

It is found in the cell membrane. Its function is as follows. Regulator of cell surface receptor signal transduction. Plays a central role in retinal vascularization by regulating norrin (NDP) signal transduction. Acts in concert with norrin (NDP) to promote FZD4 multimerization and subsequent activation of FZD4, leading to promote accumulation of beta-catenin (CTNNB1) and stimulate LEF/TCF-mediated transcriptional programs. Suprisingly, it only activates the norrin (NDP)-dependent activation of FZD4, while it does not activate the Wnt-dependent activation of FZD4, suggesting the existence of a Wnt-independent signaling that also promote accumulation the beta-catenin (CTNNB1). Acts as a regulator of membrane proteinases such as ADAM10 and MMP14/MT1-MMP. Activates ADAM10-dependent cleavage activity of amyloid precursor protein (APP). Activates MMP14/MT1-MMP-dependent cleavage activity. The chain is Tetraspanin-12 (Tspan12) from Rattus norvegicus (Rat).